The sequence spans 158 residues: 2-C-methyl-D-erythritol 2,4-cyclodiphosphate synthase (158 aa).

D9 and H11 together coordinate a divalent metal cation. Residues 9-11 and 35-36 each bind 4-CDP-2-C-methyl-D-erythritol 2-phosphate; these read DVH and HS. H43 contributes to the a divalent metal cation binding site. 4-CDP-2-C-methyl-D-erythritol 2-phosphate-binding positions include 57-59, 62-66, 133-136, F140, and R143; these read DIG, FPDTD, and TTTE.

The protein belongs to the IspF family. As to quaternary structure, homotrimer. A divalent metal cation is required as a cofactor.

The catalysed reaction is 4-CDP-2-C-methyl-D-erythritol 2-phosphate = 2-C-methyl-D-erythritol 2,4-cyclic diphosphate + CMP. It participates in isoprenoid biosynthesis; isopentenyl diphosphate biosynthesis via DXP pathway; isopentenyl diphosphate from 1-deoxy-D-xylulose 5-phosphate: step 4/6. Its function is as follows. Involved in the biosynthesis of isopentenyl diphosphate (IPP) and dimethylallyl diphosphate (DMAPP), two major building blocks of isoprenoid compounds. Catalyzes the conversion of 4-diphosphocytidyl-2-C-methyl-D-erythritol 2-phosphate (CDP-ME2P) to 2-C-methyl-D-erythritol 2,4-cyclodiphosphate (ME-CPP) with a corresponding release of cytidine 5-monophosphate (CMP). In Haemophilus influenzae (strain PittGG), this protein is 2-C-methyl-D-erythritol 2,4-cyclodiphosphate synthase.